The chain runs to 247 residues: Large ribosomal subunit protein uL30 (247 aa).

Methionine 1 carries the post-translational modification N-acetylmethionine. Repeat copies occupy residues 7–17 (KKKVPAVPETL), 18–29 (KKKRRNFAELKI), 30–41 (KRLRKKFAQKML), and 42–53 (RKARRKLIYEKA). Residues 7–53 (KKKVPAVPETLKKKRRNFAELKIKRLRKKFAQKMLRKARRKLIYEKA) form a 4 X 12 AA tandem repeats region. At threonine 16 the chain carries Phosphothreonine. N6-acetyllysine is present on lysine 123. At lysine 126 the chain carries N6-succinyllysine. A Phosphotyrosine modification is found at tyrosine 138.

It belongs to the universal ribosomal protein uL30 family. As to quaternary structure, component of the large ribosomal subunit. Homodimer. Interacts with DHX33.

It is found in the cytoplasm. In terms of biological role, component of the large ribosomal subunit. The ribosome is a large ribonucleoprotein complex responsible for the synthesis of proteins in the cell. Binds to G-rich structures in 28S rRNA and in mRNAs. Plays a regulatory role in the translation apparatus; inhibits cell-free translation of mRNAs. This Macaca fascicularis (Crab-eating macaque) protein is Large ribosomal subunit protein uL30 (RPL7).